A 732-amino-acid chain; its full sequence is Catalase-peroxidase (732 aa).

The segment at residues 97 to 220 is a cross-link (tryptophyl-tyrosyl-methioninium (Trp-Tyr) (with M-246)); sequence WHSAGTYRTS…LAAVQMGLIY (124 aa). H98 acts as the Proton acceptor in catalysis. The tryptophyl-tyrosyl-methioninium (Tyr-Met) (with W-97) cross-link spans 220 to 246; sequence YVNPEGPDGNPDPVAAGRDIRETFARM. H261 serves as a coordination point for heme b.

This sequence belongs to the peroxidase family. Peroxidase/catalase subfamily. As to quaternary structure, homodimer or homotetramer. Requires heme b as cofactor. Formation of the three residue Trp-Tyr-Met cross-link is important for the catalase, but not the peroxidase activity of the enzyme.

The catalysed reaction is H2O2 + AH2 = A + 2 H2O. It catalyses the reaction 2 H2O2 = O2 + 2 H2O. Bifunctional enzyme with both catalase and broad-spectrum peroxidase activity. This chain is Catalase-peroxidase, found in Chlorobium phaeobacteroides (strain DSM 266 / SMG 266 / 2430).